Reading from the N-terminus, the 299-residue chain is Probable lipid kinase YegS (299 aa).

The 132-residue stretch at 2-133 (AEFPASLLIL…IDMAQVNKQT (132 aa)) folds into the DAGKc domain. Residues Thr40, 66-72 (GDGTINE), and Thr95 contribute to the ATP site. 3 residues coordinate Mg(2+): Leu215, Asp218, and Leu220. Residue Glu271 is the Proton acceptor of the active site.

This sequence belongs to the diacylglycerol/lipid kinase family. YegS lipid kinase subfamily. The cofactor is Mg(2+). Ca(2+) serves as cofactor.

It is found in the cytoplasm. Its function is as follows. Probably phosphorylates lipids; the in vivo substrate is unknown. This is Probable lipid kinase YegS from Escherichia coli O9:H4 (strain HS).